Here is a 530-residue protein sequence, read N- to C-terminus: Glucose-6-phosphate isomerase (530 aa).

Residue Glu322 is the Proton donor of the active site. Catalysis depends on residues His351 and Lys455.

The protein belongs to the GPI family.

It localises to the cytoplasm. The enzyme catalyses alpha-D-glucose 6-phosphate = beta-D-fructose 6-phosphate. It functions in the pathway carbohydrate biosynthesis; gluconeogenesis. The protein operates within carbohydrate degradation; glycolysis; D-glyceraldehyde 3-phosphate and glycerone phosphate from D-glucose: step 2/4. Its function is as follows. Catalyzes the reversible isomerization of glucose-6-phosphate to fructose-6-phosphate. This is Glucose-6-phosphate isomerase from Geotalea daltonii (strain DSM 22248 / JCM 15807 / FRC-32) (Geobacter daltonii).